We begin with the raw amino-acid sequence, 103 residues long: Small ribosomal subunit protein uS10 (103 aa).

Belongs to the universal ribosomal protein uS10 family. Part of the 30S ribosomal subunit.

Its function is as follows. Involved in the binding of tRNA to the ribosomes. The polypeptide is Small ribosomal subunit protein uS10 (Alteromonas mediterranea (strain DSM 17117 / CIP 110805 / LMG 28347 / Deep ecotype)).